A 95-amino-acid polypeptide reads, in one-letter code: Ascorbate-specific PTS system EIIB component (95 aa).

Positions 1 to 95 (MENKNLHIIA…EIKQALSKVL (95 aa)) constitute a PTS EIIB type-2 domain. Cys12 functions as the Phosphocysteine intermediate in the catalytic mechanism. Cys12 carries the phosphocysteine modification.

The protein resides in the cytoplasm. The catalysed reaction is N(pros)-phospho-L-histidyl-[protein] + L-ascorbate(out) = L-ascorbate 6-phosphate(in) + L-histidyl-[protein]. In terms of biological role, the phosphoenolpyruvate-dependent sugar phosphotransferase system (sugar PTS), a major carbohydrate active transport system, catalyzes the phosphorylation of incoming sugar substrates concomitantly with their translocation across the cell membrane. The enzyme II UlaABC PTS system is involved in ascorbate transport. The chain is Ascorbate-specific PTS system EIIB component (ulaB) from Mycoplasma pneumoniae (strain ATCC 29342 / M129 / Subtype 1) (Mycoplasmoides pneumoniae).